Reading from the N-terminus, the 338-residue chain is Mas-related G-protein coupled receptor member B2 (338 aa).

Residues 1-40 (MSGDFLIKNLSTSAWKTNITVLNGSYYIDTSVCVTRNQAM) lie on the Extracellular side of the membrane. N-linked (GlcNAc...) asparagine glycans are attached at residues Asn-9, Asn-18, and Asn-23. Residues 41 to 61 (ILLSIIISLVGMGLNAIVLWF) form a helical membrane-spanning segment. The Cytoplasmic portion of the chain corresponds to 62 to 89 (LGIRMHTNAFTVYILNLAMADFLYLCSQ). The chain crosses the membrane as a helical span at residues 90–110 (FVICLLIAFYIFYSIDINIPL). Position 111 (Val-111) is a topological domain, extracellular. A helical membrane pass occupies residues 112–132 (LYVVPIFAYLSGLSILSTISI). The Cytoplasmic portion of the chain corresponds to 133 to 157 (ERCLSVIWPIWYRCKRPRHTSAITC). Residues 158 to 178 (FVLWVMSLLLGLLEGKACGLL) traverse the membrane as a helical segment. Residues 179–191 (FNSFDSYWCETFD) lie on the Extracellular side of the membrane. Residues 192–212 (VITNIWSVVFFGVLCGSSLTL) form a helical membrane-spanning segment. Residues 213–231 (LVRIFCGSQRIPMTRLYVT) lie on the Cytoplasmic side of the membrane. A helical membrane pass occupies residues 232 to 252 (ITLTVLVFLIFGLPFGIYWIL). At 253–268 (YQWISNFYYVEICNFY) the chain is on the extracellular side. Residues 269–289 (LEILFLSCVNSCMNPIIYFLV) traverse the membrane as a helical segment. Over 290–338 (GSIRHRRFRRKTLKLLLQRAMQDTPEEEQSGNKSSSEHPEELETVQSCS) the chain is Cytoplasmic. The interval 310–338 (MQDTPEEEQSGNKSSSEHPEELETVQSCS) is disordered.

The protein belongs to the G-protein coupled receptor 1 family. Mas subfamily. Mast cell-specific.

The protein resides in the cell membrane. In terms of biological role, mast cell-specific receptor for basic secretagogues, i.e. cationic amphiphilic drugs, as well as endo- or exogenous peptides, consisting of a basic head group and a hydrophobic core. Recognizes and binds small molecules containing a cyclized tetrahydroisoquinoline (THIQ), such as non-steroidal neuromuscular blocking drugs (NMBDs), including tubocurarine and atracurium. In response to these compounds, mediates pseudo-allergic reactions characterized by histamine release, inflammation and airway contraction. This is Mas-related G-protein coupled receptor member B2 (Mrgprb2) from Mus musculus (Mouse).